A 662-amino-acid chain; its full sequence is MNNFSIISGYKPAGDQPKAIDEIITGLNSKKRSQMLLGITGSGKTFTMANIIERTNRPTLIMAHNKTLAAQIYLEMKSIFPKNAVEYFVSYYDYYQPESYIVRTDTFIEKDSSINEQIDLMRHSATRSLLERRDVIVISSVSCIYGLGAPDLYYQMTVHLEPGQNYPRDKLLNDLINLQYKRNDIGFERGCFRVKGDNMDIFPSHYSDKAWRLSFFGDELEYIHEFDPLTGEKLTQLDKAMIFGNSHFVMPRERINHAISSIEVELQKRLEFLKSQDKLIEAKRLNQRTLYDLEMLTETGSCKGIENYSRFFTGRNAGQPPPTLFEYLPEDALLFIDESHVSVPQIRAMYNSDRARKEVLVEHGFRLPSALDNRPLKFEEWEKFRPQTVFVSATPGQFELEETGGTVVELIIRPTGLLDPECIIKPATNQVEDLISEIQTTINTGLRILVTTLTKKMAEDLTSYLQDLQYKTYYLHSNIHTLERIEILRNLRQGTIDILVGINLLREGIDIPECGLVAILDADKEGFLRSETSLIQTIGRAARNSRGKVILYADKMTKSIDKAVSETLRRRQIQQEYNKKHGIIPKTINRAIHALESLEEIHDNKLDKKQANALLNNPAKLKAHMDKLKKEMFKAASNLEFEQAAKLRNQLKALEEAALKLS.

The Helicase ATP-binding domain occupies 25 to 414; sequence TGLNSKKRSQ…GTVVELIIRP (390 aa). Residue 38–45 coordinates ATP; sequence GITGSGKT. Positions 91–114 match the Beta-hairpin motif; sequence YYDYYQPESYIVRTDTFIEKDSSI. Positions 430–592 constitute a Helicase C-terminal domain; sequence QVEDLISEIQ…IIPKTINRAI (163 aa). Residues 622–657 enclose the UVR domain; that stretch reads KAHMDKLKKEMFKAASNLEFEQAAKLRNQLKALEEA.

Belongs to the UvrB family. Forms a heterotetramer with UvrA during the search for lesions. Interacts with UvrC in an incision complex.

It localises to the cytoplasm. In terms of biological role, the UvrABC repair system catalyzes the recognition and processing of DNA lesions. A damage recognition complex composed of 2 UvrA and 2 UvrB subunits scans DNA for abnormalities. Upon binding of the UvrA(2)B(2) complex to a putative damaged site, the DNA wraps around one UvrB monomer. DNA wrap is dependent on ATP binding by UvrB and probably causes local melting of the DNA helix, facilitating insertion of UvrB beta-hairpin between the DNA strands. Then UvrB probes one DNA strand for the presence of a lesion. If a lesion is found the UvrA subunits dissociate and the UvrB-DNA preincision complex is formed. This complex is subsequently bound by UvrC and the second UvrB is released. If no lesion is found, the DNA wraps around the other UvrB subunit that will check the other stand for damage. The polypeptide is UvrABC system protein B (Rickettsia prowazekii (strain Madrid E)).